A 300-amino-acid chain; its full sequence is Ribosomal RNA small subunit methyltransferase H (300 aa).

S-adenosyl-L-methionine contacts are provided by residues 36–38 (GGH), aspartate 55, leucine 89, aspartate 103, and glutamine 110.

The protein belongs to the methyltransferase superfamily. RsmH family.

It localises to the cytoplasm. It catalyses the reaction cytidine(1402) in 16S rRNA + S-adenosyl-L-methionine = N(4)-methylcytidine(1402) in 16S rRNA + S-adenosyl-L-homocysteine + H(+). Functionally, specifically methylates the N4 position of cytidine in position 1402 (C1402) of 16S rRNA. The sequence is that of Ribosomal RNA small subunit methyltransferase H from Thermotoga neapolitana (strain ATCC 49049 / DSM 4359 / NBRC 107923 / NS-E).